The primary structure comprises 777 residues: Mediator of RNA polymerase II transcription subunit 15 (777 aa).

Disordered regions lie at residues 120–139 and 418–520; these read MNLP…HGIT and SIPV…EEQQ. A compositionally biased stretch (low complexity) spans 420–434; the sequence is PVMSSPSPVQQVQTP. Positions 435 to 448 are enriched in pro residues; it reads QPMPPPPQPSPQPS. The segment covering 449–471 has biased composition (low complexity); it reads QPMSQPNSNVSSGPAPSPSSFMP. A compositionally biased stretch (polar residues) spans 500–519; it reads TPGNPNSVMSPASNNQSEEQ.

Belongs to the Mediator complex subunit 15 family. Component of the Mediator complex. Interacts with srebf1 and srebf2. Interacts with smad2, smad3 and smad4.

Its subcellular location is the cytoplasm. The protein localises to the nucleus. Functionally, component of the Mediator complex, a coactivator involved in the regulated transcription of nearly all RNA polymerase II-dependent genes. Mediator functions as a bridge to convey information from gene-specific regulatory proteins to the basal RNA polymerase II transcription machinery. Mediator is recruited to promoters by direct interactions with regulatory proteins and serves as a scaffold for the assembly of a functional preinitiation complex with RNA polymerase II and the general transcription factors. Required for cholesterol-dependent gene regulation. Positively regulates the Nodal signaling pathway. The sequence is that of Mediator of RNA polymerase II transcription subunit 15 (med15) from Xenopus laevis (African clawed frog).